A 223-amino-acid chain; its full sequence is DnaJ homolog subfamily B member 9 (223 aa).

Positions 1-23 (MATPQSIFIFAICILMITELILA) are cleaved as a signal peptide. The 65-residue stretch at 26-90 (SYYDILGVPK…NRRKEYDTLG (65 aa)) folds into the J domain. The tract at residues 91 to 223 (HSAFTSGKGQ…VTTYTDCSGQ (133 aa)) is divergent targeting domain. Ser133 bears the Phosphoserine mark.

In terms of assembly, interacts with HSPA5/BiP; interaction is direct. Interacts with ERN1/IRE1 (via the luminal region). Interacts with DERL1. As to expression, widely expressed. Expressed at highest level in the liver, placenta and kidney.

The protein localises to the endoplasmic reticulum lumen. Co-chaperone for Hsp70 protein HSPA5/BiP that acts as a key repressor of the ERN1/IRE1-mediated unfolded protein response (UPR). J domain-containing co-chaperones stimulate the ATPase activity of Hsp70 proteins and are required for efficient substrate recognition by Hsp70 proteins. In the unstressed endoplasmic reticulum, interacts with the luminal region of ERN1/IRE1 and selectively recruits HSPA5/BiP: HSPA5/BiP disrupts the dimerization of the active ERN1/IRE1 luminal region, thereby inactivating ERN1/IRE1. Also involved in endoplasmic reticulum-associated degradation (ERAD) of misfolded proteins. Required for survival of B-cell progenitors and normal antibody production. The sequence is that of DnaJ homolog subfamily B member 9 (DNAJB9) from Homo sapiens (Human).